We begin with the raw amino-acid sequence, 742 residues long: Synaptic vesicle glycoprotein 2A (742 aa).

An interaction with SYT1 region spans residues 1-57 (MEEGFRDRAAFIRGAKDIAKEVKKHAAKKVVKGLDRVQDEYSRRSYSRFEEEDDDDD). At 1–169 (MEEGFRDRAA…GHGRFQWTLY (169 aa)) the chain is on the cytoplasmic side. Residues 40-49 (EYSRRSYSRF) are compositionally biased toward basic and acidic residues. Positions 40 to 145 (EYSRRSYSRF…RGEAQRRKDR (106 aa)) are disordered. Phosphoserine occurs at positions 80 and 81. A Phosphothreonine modification is found at Thr-84. Over residues 122–137 (VRGGLSDGEGPPGGRG) the composition is skewed to gly residues. Residue Ser-127 is modified to Phosphoserine. The chain crosses the membrane as a helical span at residues 170–190 (FVLGLALMADGVEVFVVGFVL). Over 191–205 (PSAEKDMCLSDSNKG) the chain is Extracellular. The chain crosses the membrane as a helical span at residues 206-226 (MLGLIVYLGMMVGAFLWGGLA). At 227-233 (DRLGRRQ) the chain is on the cytoplasmic side. A helical membrane pass occupies residues 234–254 (CLLISLSVNSVFAFFSSFVQG). Topologically, residues 255–262 (YGTFLFCR) are extracellular. The chain crosses the membrane as a helical span at residues 263–283 (LLSGVGIGGSIPIVFSYFSEF). At 284-294 (LAQEKRGEHLS) the chain is on the cytoplasmic side. A helical transmembrane segment spans residues 295 to 315 (WLCMFWMIGGVYAAAMAWAII). Over 316-334 (PHYGWSFQMGSAYQFHSWR) the chain is Extracellular. A helical membrane pass occupies residues 335–355 (VFVLVCAFPSVFAIGALTTQP). Topologically, residues 356–447 (ESPRFFLENG…CFSPEYRRIT (92 aa)) are cytoplasmic. Ser-393 is subject to Phosphoserine. A helical transmembrane segment spans residues 448–468 (LMMMGVWFTMSFSYYGLTVWF). Residues 469–598 (PDMIRHLQAV…GTGEGAYMVY (130 aa)) lie on the Extracellular side of the membrane. A Phosphotyrosine modification is found at Tyr-480. Asn-498, Asn-548, and Asn-573 each carry an N-linked (GlcNAc...) asparagine glycan. A helical membrane pass occupies residues 599 to 619 (FVSFLGTLAVLPGNIVSALLM). Residues 620–626 (DKIGRLR) lie on the Cytoplasmic side of the membrane. The chain crosses the membrane as a helical span at residues 627 to 647 (MLAGSSVLSCVSCFFLSFGNS). Topologically, residues 648–651 (ESAM) are extracellular. A helical membrane pass occupies residues 652 to 672 (IALLCLFGGVSIASWNALDVL). The Cytoplasmic portion of the chain corresponds to 673–685 (TVELYPSDKRTTA). A helical transmembrane segment spans residues 686-708 (FGFLNALCKLAAVLGISIFTSFV). Over 709–712 (GITK) the chain is Extracellular. The chain crosses the membrane as a helical span at residues 713-731 (AAPILFASAALALGSSLAL). Residues 732–742 (KLPETRGQVLQ) lie on the Cytoplasmic side of the membrane.

This sequence belongs to the major facilitator superfamily. Interacts with SYT1/synaptotagmin-1 in a calcium-dependent manner. Binds the adapter protein complex AP-2. As to quaternary structure, (Microbial infection) Interacts with C.botulinum neurotoxin type A (BoNT/A, botA). Post-translationally, phosphorylation by CK1 of the N-terminal cytoplasmic domain regulates interaction with SYT1. In terms of processing, N-glycosylated. In terms of tissue distribution, expressed in conventional synapses and cone ribbon synapses in the retina (at protein level). Expressed in diaphragm motor nerve terminals (at protein level). Expressed in hippocampus neurons (at protein level).

The protein localises to the presynapse. It is found in the cytoplasmic vesicle. It localises to the secretory vesicle. The protein resides in the synaptic vesicle membrane. Plays a role in the control of regulated secretion in neural and endocrine cells, enhancing selectively low-frequency neurotransmission. Positively regulates vesicle fusion by maintaining the readily releasable pool of secretory vesicles. In terms of biological role, (Microbial infection) Receptor for C.botulinum neurotoxin type A (BoNT/A, botA); the toxin probably binds via extracellular loop 4. Functionally, (Microbial infection) Possible receptor for C.botulinum neurotoxin type D (BoNT/D, botD); BoNT/D does not bind to extracellular loop 4 as do BoNT/A and BoNT/E. Its function is as follows. (Microbial infection) Receptor for C.botulinum neurotoxin type E (BoNT/E); the toxin probably binds via extracellular loop 4. It probably requires glycosylation of Asn-573. The polypeptide is Synaptic vesicle glycoprotein 2A (Sv2a) (Mus musculus (Mouse)).